The following is a 408-amino-acid chain: MEEYVYIDGKKYRRGYTTGSCATGASKAAVYMLITKNRINTINIDTPKGIPLLLKVDNINISDTFVECSIKKDGGDDIDATHTMDIYARAEIVAKNDKNKGYLTLKDIDSLSTNSECKSELYKFIRVYGGTGIGVVTKKGLSVDVGKPAINPTPLKMINHEIRKLIGDNFESILGNDKVLKITIFAPQGETVAKKTFNPRLGIVGGISIIGTTGIVEPMSDDGWKKSLSIELQMKKEQGLDKIILVPGNHGEQFIREKLNLDIKYVVRVSNFIGYMIKEAQRIGYKKILMAGHIGKFIKVSAGIFNTHSKVADARSEILVANLALMGARYEFLNKINQCVTTEEAVELINNSEYREVYNILSNKCRERVKQYLNEDSDDIDVEVIIFSMDKSLLGKSDNTDDLVEVFI.

The protein belongs to the CbiD family.

It catalyses the reaction Co-precorrin-5B + S-adenosyl-L-methionine = Co-precorrin-6A + S-adenosyl-L-homocysteine. It participates in cofactor biosynthesis; adenosylcobalamin biosynthesis; cob(II)yrinate a,c-diamide from sirohydrochlorin (anaerobic route): step 6/10. Functionally, catalyzes the methylation of C-1 in cobalt-precorrin-5B to form cobalt-precorrin-6A. This Clostridioides difficile (strain 630) (Peptoclostridium difficile) protein is Cobalt-precorrin-5B C(1)-methyltransferase.